The primary structure comprises 714 residues: MSGNDEAAAAGVAPPQTLQFAPFESQIEMPFYSALFSRKLDHDKLDDSVRPVIGLYQPMSERPPAESTRMQIQGGALSSSHVPMGYTRADGSIRNFNTIEDFKKADKGAILRQAGAQIWDAIKDGSIYEIPSLLSSFAILSYADLKKYRFTYWFAYPTLHSVPAWRRDGPLARFSSKETTALVNEVGTFRYAHDTRQHGFFLAKKVPYRSGPFRRGLPRDDSDGDDIGFTWSIGALGEFEKGFFKGIKEEDQYIAFVDSSSYAENPSWPLRNLLVLIRQRFQLQKANILCYRDTQARRDEPRSIVLPLASEGPATPQTSEMPKVTGWERHPSSKLQARVISLAEYMDPTRIADQAVDLNLKLMKWRISPKLDLEAMRSLKCLLLGAGTLGSYVSRNLMGWGVRKITFVDYGNVSFSNPVRQPLFEFEDCLSGGVPKAPKAAEALKKINPGVEAEGHVLSVPMLGHPVLNEAQTKEDFEKLQQLIKAHDVVFLLMDTRESRWLPTVMGKAEGKIVMNAALGFDTYVVMRHGAAPKDGTESTLGCYFCNDVVAPSDSMKDQTLDQQCTVTRPGVAAIASAMLVEMLTSVLQHPQREHAPAPKATGPPGNPEYQRDPPDHALGIVPHQVRGFLANFQNMIISGESYPNCSACSSPIVGAYKSDGWEFVKKALSDKDYVLELSGLAEVQRQAEAMQNEVDWDEDEDVAAAEEGDGEML.

The GXGXXG motif motif lies at 380-390; the sequence is KCLLLGAGTLG. The active-site Glycyl thioester intermediate is the cysteine 565. 2 disordered regions span residues 591 to 616 and 691 to 714; these read PQREHAPAPKATGPPGNPEYQRDPPD and MQNEVDWDEDEDVAAAEEGDGEML. Acidic residues predominate over residues 695–714; the sequence is VDWDEDEDVAAAEEGDGEML.

Belongs to the ATG7 family. Homodimer.

It is found in the cytoplasm. Its subcellular location is the preautophagosomal structure. E1-like activating enzyme involved in the 2 ubiquitin-like systems required for cytoplasm to vacuole transport (Cvt) and autophagy. Activates ATG12 for its conjugation with ATG5 and ATG8 for its conjugation with phosphatidylethanolamine. Both systems are needed for the ATG8 association to Cvt vesicles and autophagosomes membranes. Autophagy is essential for maintenance of amino acid levels and protein synthesis under nitrogen starvation. Required for selective autophagic degradation of the nucleus (nucleophagy) as well as for mitophagy which contributes to regulate mitochondrial quantity and quality by eliminating the mitochondria to a basal level to fulfill cellular energy requirements and preventing excess ROS production. Plays a role in the regulation of filamentous growth and chronological longevity. This is Ubiquitin-like modifier-activating enzyme ATG7 (ATG7) from Pyricularia oryzae (strain 70-15 / ATCC MYA-4617 / FGSC 8958) (Rice blast fungus).